The following is a 241-amino-acid chain: MTTATQSSAPGVNVDQAEVEKFSALAARWWDPESEFKPLHAINPLRLGWIQETAGSLSGKRVLDVGCGGGILSESMAVAGAQVTGIDLAEKSLKIARLHGLESGVKVDYRAVPVEELATEQPGQYDVVTCMEMLEHVPDPASVVRACAALAKPGGWVFFSTLNRNPKSFLFAIVGAEYVLRLLPRGTHSYDSFIKPSELAASARQAGLEPTGMRGMEYNPITQVYSLSANTSVNYLMSTRK.

Residues R46, G66, D87, and M131 each coordinate S-adenosyl-L-methionine.

It belongs to the methyltransferase superfamily. UbiG/COQ3 family.

The enzyme catalyses a 3-demethylubiquinol + S-adenosyl-L-methionine = a ubiquinol + S-adenosyl-L-homocysteine + H(+). It catalyses the reaction a 3-(all-trans-polyprenyl)benzene-1,2-diol + S-adenosyl-L-methionine = a 2-methoxy-6-(all-trans-polyprenyl)phenol + S-adenosyl-L-homocysteine + H(+). It participates in cofactor biosynthesis; ubiquinone biosynthesis. Functionally, O-methyltransferase that catalyzes the 2 O-methylation steps in the ubiquinone biosynthetic pathway. The polypeptide is Ubiquinone biosynthesis O-methyltransferase (Bordetella bronchiseptica (strain ATCC BAA-588 / NCTC 13252 / RB50) (Alcaligenes bronchisepticus)).